A 315-amino-acid chain; its full sequence is Methionyl-tRNA formyltransferase (315 aa).

113-116 is a binding site for (6S)-5,6,7,8-tetrahydrofolate; that stretch reads SLLP.

Belongs to the Fmt family.

The enzyme catalyses L-methionyl-tRNA(fMet) + (6R)-10-formyltetrahydrofolate = N-formyl-L-methionyl-tRNA(fMet) + (6S)-5,6,7,8-tetrahydrofolate + H(+). In terms of biological role, attaches a formyl group to the free amino group of methionyl-tRNA(fMet). The formyl group appears to play a dual role in the initiator identity of N-formylmethionyl-tRNA by promoting its recognition by IF2 and preventing the misappropriation of this tRNA by the elongation apparatus. In Escherichia coli O139:H28 (strain E24377A / ETEC), this protein is Methionyl-tRNA formyltransferase.